Consider the following 1826-residue polypeptide: ATPase family AAA domain-containing protein 5 (1826 aa).

Ser-44 bears the Phosphoserine mark. A Glycyl lysine isopeptide (Lys-Gly) (interchain with G-Cter in SUMO2) cross-link involves residue Lys-127. Disordered regions lie at residues 170–254 (SIED…KRAD), 282–311 (PAVP…CEPS), 323–367 (AQVH…RKSN), 398–572 (QQFM…EPGS), 588–623 (RSCS…ARTS), 647–684 (KFTR…TSKN), and 709–729 (VVPL…KSPE). At Ser-215 the chain carries Phosphoserine. Residues 243-254 (NDSRTHATKRAD) show a composition bias toward basic and acidic residues. The span at 298–311 (SGSEGELSGSCEPS) shows a compositional bias: low complexity. Phosphoserine occurs at positions 351 and 366. Residues 365–381 (KSNVVIQEGQLELAVLE) are interaction with WDR48. The segment covering 418–442 (KPLEKQKDPSEKSVHEGDSSSEKII) has biased composition (basic and acidic residues). Residues 445 to 456 (PNIQRVSSQGCL) show a composition bias toward polar residues. Positions 459–468 (HADRGSFPKE) are enriched in basic and acidic residues. The span at 469-481 (KSKKPNKKGKKTR) shows a compositional bias: basic residues. Over residues 487-505 (NREENIQKEKTAFSLKDEQ) the composition is skewed to basic and acidic residues. A compositionally biased stretch (polar residues) spans 540-559 (DSVQMSLCNRNKSRSSSTPT). Phosphoserine occurs at positions 591 and 603. 2 positions are modified to phosphoserine: Ser-727 and Ser-801. Residues 965 to 1034 (GKQASPQLQP…NLDPSRDSGT (70 aa)) form a disordered region. Over residues 1006-1019 (EEMKGRSKDLDERI) the composition is skewed to basic and acidic residues. Ser-1104 is subject to Phosphoserine. 1119-1126 (GPTGVGKT) is a binding site for ATP. Residues 1183-1216 (YNIGKSPKKLNSPGKVVTSPRKLPPSSPKTSGQK) form a disordered region. The short motif at 1415-1419 (LVCSE) is the LXCXE motif element. Disordered stretches follow at residues 1527-1552 (PASM…RKQK) and 1592-1611 (SNPE…VPQP). An interaction with RAD51 and RFC5 region spans residues 1612-1701 (PKTLAEKKCC…ATAEALSFTE (90 aa)).

It belongs to the AAA ATPase family. In terms of assembly, component of a heteropentameric replication factor ATAD5 RFC-like complex composed of one large subunit (ATAD5) and four small subunits (RFC2, RFC3, RFC4 and RFC5). Within the ATAD5 RFC-like complex, interacts with RFC2, RFC4 and RFC5. Within the ATAD5 RFC-like complex, interacts directly via-N terminal with RAD51; the interactions is enhanced under replication stress. Interacts with RB1 predominantly in G1 phase via its LXCXE motif. Interacts with RAD9A in growing cells. The interaction with RAD9A is reduced after exposure to DNA replication-inhibiting agents. Interacts with BRD4. Interacts with PCNA. Interacts with deubiquitinating enzyme USP1, and its associated factor, WDR48. ATR may stimulate the RAD9A dissociation. In terms of tissue distribution, expressed ubiquitously in all cell lines like teratocarcinoma, cell lymphoma, lymphoma.

The protein localises to the nucleus. Functionally, has an important role in DNA replication and in maintaining genome integrity during replication stress. Involved in a RAD9A-related damage checkpoint, a pathway that is important in determining whether DNA damage is compatible with cell survival or whether it requires cell elimination by apoptosis. Modulates the RAD9A interaction with BCL2 and thereby induces DNA damage-induced apoptosis. Promotes PCNA deubiquitination by recruiting the ubiquitin-specific protease 1 (USP1) and WDR48 thereby down-regulating the error-prone damage bypass pathway. As component of the ATAD5 RFC-like complex, regulates the function of the DNA polymerase processivity factor PCNA by unloading the ring-shaped PCNA homotrimer from DNA after replication during the S phase of the cell cycle. This seems to be dependent on its ATPase activity. Plays important roles in restarting stalled replication forks under replication stress, by unloading the PCNA homotrimer from DNA and recruiting RAD51 possibly through an ATR-dependent manner. Ultimately this enables replication fork regression, breakage, and eventual fork restart. Both the PCNA unloading activity and the interaction with WDR48 are required to efficiently recruit RAD51 to stalled replication forks. Promotes the generation of MUS81-mediated single-stranded DNA-associated breaks in response to replication stress, which is an alternative pathway to restart stalled/regressed replication forks. This chain is ATPase family AAA domain-containing protein 5 (Atad5), found in Mus musculus (Mouse).